The sequence spans 404 residues: Pectate lyase E (404 aa).

The signal sequence occupies residues 1–41 (MNNSRMSSVSTQKTTGRSALGTKSALAAIIATTMMVSVASA). Ca(2+)-binding residues include Asp-182 and Asp-225. Residue Arg-278 is part of the active site.

Belongs to the polysaccharide lyase 1 family. PLBC subfamily. Ca(2+) serves as cofactor.

Its subcellular location is the secreted. The catalysed reaction is Eliminative cleavage of (1-&gt;4)-alpha-D-galacturonan to give oligosaccharides with 4-deoxy-alpha-D-galact-4-enuronosyl groups at their non-reducing ends.. The protein operates within glycan metabolism; pectin degradation; 2-dehydro-3-deoxy-D-gluconate from pectin: step 2/5. Its function is as follows. Involved in maceration and soft-rotting of plant tissue. Pectate lyases have been implicated as pathogenicity factors which induce maceration or rotting of plant tissue. PelE is sufficient to induce these effects under laboratory conditions. This is Pectate lyase E (pelE) from Dickeya dadantii (strain 3937) (Erwinia chrysanthemi (strain 3937)).